A 38-amino-acid polypeptide reads, in one-letter code: Photosystem II reaction center protein L (38 aa).

Residues 17 to 37 (SLYWGLLLIFVLAVLFSSYIF) form a helical membrane-spanning segment.

This sequence belongs to the PsbL family. PSII is composed of 1 copy each of membrane proteins PsbA, PsbB, PsbC, PsbD, PsbE, PsbF, PsbH, PsbI, PsbJ, PsbK, PsbL, PsbM, PsbT, PsbY, PsbZ, Psb30/Ycf12, at least 3 peripheral proteins of the oxygen-evolving complex and a large number of cofactors. It forms dimeric complexes.

It localises to the plastid. Its subcellular location is the chloroplast thylakoid membrane. Its function is as follows. One of the components of the core complex of photosystem II (PSII). PSII is a light-driven water:plastoquinone oxidoreductase that uses light energy to abstract electrons from H(2)O, generating O(2) and a proton gradient subsequently used for ATP formation. It consists of a core antenna complex that captures photons, and an electron transfer chain that converts photonic excitation into a charge separation. This subunit is found at the monomer-monomer interface and is required for correct PSII assembly and/or dimerization. In Bigelowiella natans (Pedinomonas minutissima), this protein is Photosystem II reaction center protein L.